Consider the following 824-residue polypeptide: E3 ubiquitin-protein ligase TRIM71 (824 aa).

An RING-type zinc finger spans residues 23–93 (CPLCKELCGC…PLKLRCPTCD (71 aa)). Positions 37-56 (SSNSSTSSSSSQTSNSSSTS) are disordered. Residues 147–194 (LSDPQCSSCDEGNPATSHCLDCQEYLCDNCVRAHQRVRLTKDHFIEGL) form a B box-type 1; atypical zinc finger. Positions 152, 155, 176, 180, 234, 237, 257, and 262 each coordinate Zn(2+). The B box-type 2 zinc-finger motif lies at 229–270 (ERMDFCQHHDDAVLRFFCDSCTVPICRECSLGRHAGHSFTYL). Residues 293 to 321 (QAIQLSIEKAQAIAEQVELKAKVVQSEVK) adopt a coiled-coil conformation. The stretch at 435–536 (SSGAFATASK…IEGSPFKVMV (102 aa)) is one Filamin repeat. NHL repeat units lie at residues 549 to 592 (MASF…FKPC), 596 to 639 (HHKF…FTFD), 643 to 686 (LLKF…FGPD), 690 to 733 (LNKY…IRPD), 737 to 780 (ARFL…FEPN), and 784 to 824 (LCKF…ILMF).

It belongs to the TRIM/RBCC family.

It localises to the cytoplasm. Its subcellular location is the P-body. It carries out the reaction S-ubiquitinyl-[E2 ubiquitin-conjugating enzyme]-L-cysteine + [acceptor protein]-L-lysine = [E2 ubiquitin-conjugating enzyme]-L-cysteine + N(6)-ubiquitinyl-[acceptor protein]-L-lysine.. It participates in protein modification; protein ubiquitination. Functionally, E3 ubiquitin-protein ligase that cooperates with the microRNAs (miRNAs) machinery and promotes embryonic stem cells proliferation and maintenance. Binds to miRNAs and participates in post-transcriptional repression of transcripts. Required to maintain proliferation and prevent premature differentiation of neural progenitor cells during early neural development. In Danio rerio (Zebrafish), this protein is E3 ubiquitin-protein ligase TRIM71 (trim71).